The chain runs to 473 residues: Serine palmitoyltransferase 1 (473 aa).

Residues 1–15 are Lumenal-facing; that stretch reads MATVAEQWVLVEMVQ. The segment at 1–66 is interaction with SPTLC2; that stretch reads MATVAEQWVL…KEELIEEWQP (66 aa). A helical membrane pass occupies residues 16 to 36; sequence ALYEAPAYHLILEGILILWII. Residues 37–473 are Cytoplasmic-facing; sequence RLVFSKTYKL…IREAAQAVLL (437 aa). Residue Tyr-164 is modified to Phosphotyrosine; by ABL.

The protein belongs to the class-II pyridoxal-phosphate-dependent aminotransferase family. As to quaternary structure, component of the serine palmitoyltransferase (SPT) complex, which is also composed of SPTLC2 or SPTLC3 and SPTSSA or SPTSSB. The heterodimer with SPTLC2 or SPTLC3 forms the catalytic core of the enzyme, while SPTSSA or SPTSSB subunits determine substrate specificity. SPT also interacts with ORMDL proteins, especially ORMDL3, which negatively regulate SPT activity in the presence of ceramides. Forms dimers of heterodimers with SPTLC2. Interacts with RTN4 (isoform B). Pyridoxal 5'-phosphate is required as a cofactor. Phosphorylation at Tyr-164 inhibits activity and promotes cell survival. As to expression, expressed in a variety of tissues. Highest expression in brain, kidney and liver. Expressed in brown and white adipose tissues.

It localises to the endoplasmic reticulum membrane. The enzyme catalyses L-serine + hexadecanoyl-CoA + H(+) = 3-oxosphinganine + CO2 + CoA. The catalysed reaction is octadecanoyl-CoA + L-serine + H(+) = 3-oxoeicosasphinganine + CO2 + CoA. It carries out the reaction tetradecanoyl-CoA + L-serine + H(+) = 3-oxohexadecasphinganine + CO2 + CoA. It catalyses the reaction dodecanoyl-CoA + L-serine + H(+) = 3-oxotetradecasphinganine + CO2 + CoA. The protein operates within lipid metabolism; sphingolipid metabolism. With respect to regulation, SPT complex catalytic activity is negatively regulated by ORMDL proteins, including ORMDL3, in the presence of ceramides. This mechanism allows to maintain ceramide levels at sufficient concentrations for the production of complex sphingolipids, but which prevents the accumulation of ceramides to levels that trigger apoptosis. Its function is as follows. Component of the serine palmitoyltransferase multisubunit enzyme (SPT) that catalyzes the initial and rate-limiting step in sphingolipid biosynthesis by condensing L-serine and activated acyl-CoA (most commonly palmitoyl-CoA) to form long-chain bases. The SPT complex is also composed of SPTLC2 or SPTLC3 and SPTSSA or SPTSSB. Within this complex, the heterodimer with SPTLC2 or SPTLC3 forms the catalytic core. The composition of the serine palmitoyltransferase (SPT) complex determines the substrate preference. The SPTLC1-SPTLC2-SPTSSA complex shows a strong preference for C16-CoA substrate, while the SPTLC1-SPTLC3-SPTSSA isozyme uses both C14-CoA and C16-CoA as substrates, with a slight preference for C14-CoA. The SPTLC1-SPTLC2-SPTSSB complex shows a strong preference for C18-CoA substrate, while the SPTLC1-SPTLC3-SPTSSB isozyme displays an ability to use a broader range of acyl-CoAs, without apparent preference. Required for adipocyte cell viability and metabolic homeostasis. In Mus musculus (Mouse), this protein is Serine palmitoyltransferase 1 (Sptlc1).